Here is a 246-residue protein sequence, read N- to C-terminus: tRNA (guanine-N(1)-)-methyltransferase (246 aa).

S-adenosyl-L-methionine is bound by residues Gly-113 and 133-138 (IGDYVL).

Belongs to the RNA methyltransferase TrmD family. As to quaternary structure, homodimer.

The protein localises to the cytoplasm. It carries out the reaction guanosine(37) in tRNA + S-adenosyl-L-methionine = N(1)-methylguanosine(37) in tRNA + S-adenosyl-L-homocysteine + H(+). Functionally, specifically methylates guanosine-37 in various tRNAs. The polypeptide is tRNA (guanine-N(1)-)-methyltransferase (Yersinia enterocolitica serotype O:8 / biotype 1B (strain NCTC 13174 / 8081)).